The following is a 320-amino-acid chain: Glutaminase (320 aa).

Residues Ser70, Asn121, Glu165, Asn172, Tyr196, Tyr248, and Val266 each coordinate substrate.

It belongs to the glutaminase family. Homotetramer.

It catalyses the reaction L-glutamine + H2O = L-glutamate + NH4(+). This is Glutaminase from Mycobacterium marinum (strain ATCC BAA-535 / M).